Consider the following 153-residue polypeptide: Subtilisin propeptide-like protein (153 aa).

The signal sequence occupies residues 1 to 27 (MKFLFAFNFFSLYIYLYEFLCIHLCGS). The interval 127–153 (QISHLSEFIQYLLNKNVCIEFNQNVML) is dispensable for parasite growth in host erythrocytes.

The protein resides in the secreted. The protein localises to the parasitophorous vacuole lumen. It localises to the cell membrane. Functionally, acts as a specific inhibitor of subtilisin-like protease SUB1. This chain is Subtilisin propeptide-like protein, found in Plasmodium falciparum (isolate 3D7).